An 86-amino-acid chain; its full sequence is Probable weak neurotoxin NNAM2 (86 aa).

An N-terminal signal peptide occupies residues 1–21 (MKTLLLTLVVVTIVCLDLGYT). 5 cysteine pairs are disulfide-bonded: Cys24–Cys45, Cys27–Cys32, Cys38–Cys63, Cys67–Cys78, and Cys79–Cys84.

The protein belongs to the three-finger toxin family. Ancestral subfamily. Orphan group II sub-subfamily. Expressed by the venom gland.

The protein resides in the secreted. In terms of biological role, binds with low affinity to muscular (alpha-1-beta-1-delta-epsilon/CHRNA1-CHRNB1-CHRND-CHRNE) and very low affinity to neuronal (alpha-7/CHRNA7) nicotinic acetylcholine receptor (nAChR). This chain is Probable weak neurotoxin NNAM2, found in Naja atra (Chinese cobra).